We begin with the raw amino-acid sequence, 317 residues long: Porphobilinogen deaminase (317 aa).

Cys245 is modified (S-(dipyrrolylmethanemethyl)cysteine).

The protein belongs to the HMBS family. Monomer. Dipyrromethane is required as a cofactor.

It catalyses the reaction 4 porphobilinogen + H2O = hydroxymethylbilane + 4 NH4(+). The protein operates within porphyrin-containing compound metabolism; protoporphyrin-IX biosynthesis; coproporphyrinogen-III from 5-aminolevulinate: step 2/4. Its pathway is porphyrin-containing compound metabolism; chlorophyll biosynthesis. Functionally, tetrapolymerization of the monopyrrole PBG into the hydroxymethylbilane pre-uroporphyrinogen in several discrete steps. The sequence is that of Porphobilinogen deaminase from Synechococcus sp. (strain CC9605).